A 650-amino-acid polypeptide reads, in one-letter code: Kinesin-like protein KIF22-B (650 aa).

Residues 31-359 form the Kinesin motor domain; it reads RVRVAVRLRP…LNFAAKSKQI (329 aa). ATP is bound at residue 116–123; the sequence is GPTGAGKT. The tract at residues 365 to 416 is disordered; sequence SRETTQTVAQPAMKRPREEAEATTSSRQRKKSKTDSTESSPNSSMESTGKRK. Residues 401–411 are compositionally biased toward low complexity; sequence TESSPNSSMES. Positions 452 to 498 form a coiled coil; sequence KRERMALLKKWEESQMEIERLKEKQKELEQKAMEAEARLEKSNNSDL. Residues 560-563 carry the Important for regulated proteolytic degradation motif; that stretch reads GHEN.

The protein belongs to the TRAFAC class myosin-kinesin ATPase superfamily. Kinesin family. In terms of processing, ubiquitinated, leading to its subsequent proteasomal degradation.

It is found in the nucleus. Its subcellular location is the cytoplasm. The protein resides in the cytoskeleton. Functionally, kinesin family member that is involved in spindle formation and the movements of chromosomes during mitosis and meiosis. Binds to microtubules and to DNA. This is Kinesin-like protein KIF22-B (kif22-b) from Xenopus laevis (African clawed frog).